Reading from the N-terminus, the 201-residue chain is Ribonuclease HII (201 aa).

The RNase H type-2 domain maps to 10-200; sequence LIEAGCDEAG…LGDGQLELFS (191 aa). Positions 16, 17, and 108 each coordinate a divalent metal cation.

It belongs to the RNase HII family. Requires Mn(2+) as cofactor. The cofactor is Mg(2+).

It localises to the cytoplasm. It catalyses the reaction Endonucleolytic cleavage to 5'-phosphomonoester.. Endonuclease that specifically degrades the RNA of RNA-DNA hybrids. In Bacteroides fragilis (strain ATCC 25285 / DSM 2151 / CCUG 4856 / JCM 11019 / LMG 10263 / NCTC 9343 / Onslow / VPI 2553 / EN-2), this protein is Ribonuclease HII.